Here is a 69-residue protein sequence, read N- to C-terminus: Large ribosomal subunit protein bL32c (69 aa).

This sequence belongs to the bacterial ribosomal protein bL32 family.

The protein localises to the plastid. It localises to the chloroplast. This Marchantia polymorpha (Common liverwort) protein is Large ribosomal subunit protein bL32c (rpl32).